A 265-amino-acid chain; its full sequence is Sulfur carrier protein FdhD (265 aa).

Residue Cys-107 is the Cysteine persulfide intermediate of the active site.

The protein belongs to the FdhD family.

The protein localises to the cytoplasm. Its function is as follows. Required for formate dehydrogenase (FDH) activity. Acts as a sulfur carrier protein that transfers sulfur from IscS to the molybdenum cofactor prior to its insertion into FDH. This is Sulfur carrier protein FdhD from Staphylococcus aureus (strain JH9).